The sequence spans 465 residues: Argininosuccinate lyase (465 aa).

It belongs to the lyase 1 family. Argininosuccinate lyase subfamily.

The protein localises to the cytoplasm. It catalyses the reaction 2-(N(omega)-L-arginino)succinate = fumarate + L-arginine. It functions in the pathway amino-acid biosynthesis; L-arginine biosynthesis; L-arginine from L-ornithine and carbamoyl phosphate: step 3/3. The protein is Argininosuccinate lyase of Nitrobacter winogradskyi (strain ATCC 25391 / DSM 10237 / CIP 104748 / NCIMB 11846 / Nb-255).